Here is a 192-residue protein sequence, read N- to C-terminus: Probable GTP-binding protein EngB (192 aa).

The EngB-type G domain occupies 22–192 (SLPEIVFVGR…LLEQLENYTG (171 aa)). GTP contacts are provided by residues 30-37 (GRSNVGKS), 57-61 (GKTQL), 75-78 (DLPG), 142-145 (TKYD), and 172-174 (YSA). Positions 37 and 59 each coordinate Mg(2+).

Belongs to the TRAFAC class TrmE-Era-EngA-EngB-Septin-like GTPase superfamily. EngB GTPase family. It depends on Mg(2+) as a cofactor.

Functionally, necessary for normal cell division and for the maintenance of normal septation. This Prosthecochloris aestuarii (strain DSM 271 / SK 413) protein is Probable GTP-binding protein EngB.